We begin with the raw amino-acid sequence, 162 residues long: uncharacterized protein (162 aa).

The signal sequence occupies residues 1–21; sequence MEGIMKKFFALMTLIAGISFS. A coiled-coil region spans residues 32–118; that stretch reads VIRESKFIAK…KKAELEKMVF (87 aa).

This sequence belongs to the Skp family.

This is an uncharacterized protein from Aquifex aeolicus (strain VF5).